A 280-amino-acid chain; its full sequence is Secreted RxLR effector protein 39 (280 aa).

The first 19 residues, 1–19 (MRGAYYVAIALLIVASCSA), serve as a signal peptide directing secretion. Residues 49–70 (RVLRGSRDLKNKWAVHAGGEDR) carry the RxLR-dEER motif. Residues 229-249 (EVKARSSKRQRTNPMLNNMDG) form a disordered region.

This sequence belongs to the RxLR effector family.

It localises to the secreted. The protein localises to the host nucleus. In terms of biological role, secreted effector that completely suppresses the host cell death induced by cell death-inducing proteins. This chain is Secreted RxLR effector protein 39, found in Plasmopara viticola (Downy mildew of grapevine).